The sequence spans 205 residues: Holliday junction branch migration complex subunit RuvA (205 aa).

A domain I region spans residues 1-62; that stretch reads MFEYVTGYVE…EDIMALYGFK (62 aa). The interval 63 to 141 is domain II; the sequence is TREERLLFTK…DVVPDAFVDL (79 aa). The flexible linker stretch occupies residues 142–152; it reads FSDTERFDEKK. A domain III region spans residues 153-205; sequence GTSAELDEALEALRALGYAEREVSRVVPELLKESLTTDQYIKKALSLLLNGKR.

The protein belongs to the RuvA family. As to quaternary structure, homotetramer. Forms an RuvA(8)-RuvB(12)-Holliday junction (HJ) complex. HJ DNA is sandwiched between 2 RuvA tetramers; dsDNA enters through RuvA and exits via RuvB. An RuvB hexamer assembles on each DNA strand where it exits the tetramer. Each RuvB hexamer is contacted by two RuvA subunits (via domain III) on 2 adjacent RuvB subunits; this complex drives branch migration. In the full resolvosome a probable DNA-RuvA(4)-RuvB(12)-RuvC(2) complex forms which resolves the HJ.

The protein localises to the cytoplasm. The RuvA-RuvB-RuvC complex processes Holliday junction (HJ) DNA during genetic recombination and DNA repair, while the RuvA-RuvB complex plays an important role in the rescue of blocked DNA replication forks via replication fork reversal (RFR). RuvA specifically binds to HJ cruciform DNA, conferring on it an open structure. The RuvB hexamer acts as an ATP-dependent pump, pulling dsDNA into and through the RuvAB complex. HJ branch migration allows RuvC to scan DNA until it finds its consensus sequence, where it cleaves and resolves the cruciform DNA. The polypeptide is Holliday junction branch migration complex subunit RuvA (Bacillus cereus (strain G9842)).